The sequence spans 598 residues: UvrABC system protein C (598 aa).

The GIY-YIG domain occupies 14–91; that stretch reads DSPGCYLHKD…IQKNMPKYNI (78 aa). The UVR domain maps to 196-231; the sequence is DKIIEDLRSKMLAASEEMAFERAAEYRDLISGIATM.

This sequence belongs to the UvrC family. As to quaternary structure, interacts with UvrB in an incision complex.

The protein localises to the cytoplasm. Its function is as follows. The UvrABC repair system catalyzes the recognition and processing of DNA lesions. UvrC both incises the 5' and 3' sides of the lesion. The N-terminal half is responsible for the 3' incision and the C-terminal half is responsible for the 5' incision. The chain is UvrABC system protein C from Streptococcus pyogenes serotype M18 (strain MGAS8232).